The sequence spans 308 residues: D-alanine--D-alanine ligase (308 aa).

One can recognise an ATP-grasp domain in the interval 103 to 302; the sequence is KTVMATAGVP…FDELVQWMVE (200 aa). Residue 130–184 coordinates ATP; sequence MAPPYVIKPVADGSSVGVFIVTEDQAHPPQELFRDDWPHGEELLVEKYIAGRELT. The Mg(2+) site is built by Asp-252, Glu-269, and Asn-271.

It belongs to the D-alanine--D-alanine ligase family. Mg(2+) serves as cofactor. Requires Mn(2+) as cofactor.

It is found in the cytoplasm. It carries out the reaction 2 D-alanine + ATP = D-alanyl-D-alanine + ADP + phosphate + H(+). It participates in cell wall biogenesis; peptidoglycan biosynthesis. Its function is as follows. Cell wall formation. In Afipia carboxidovorans (strain ATCC 49405 / DSM 1227 / KCTC 32145 / OM5) (Oligotropha carboxidovorans), this protein is D-alanine--D-alanine ligase.